Reading from the N-terminus, the 254-residue chain is E3 ubiquitin-protein ligase NEURL3 (254 aa).

The NHR domain maps to 17-174 (ALSFHGNATG…TTKAIELLDP (158 aa)). The RING-type zinc finger occupies 197-236 (CVICFHNTANTRLMPCGHSHFCGSCAWHIFKDTARCPICR).

As to expression, expressed in alveolar epithelial type II cells.

Its subcellular location is the cytoplasm. It catalyses the reaction S-ubiquitinyl-[E2 ubiquitin-conjugating enzyme]-L-cysteine + [acceptor protein]-L-lysine = [E2 ubiquitin-conjugating enzyme]-L-cysteine + N(6)-ubiquitinyl-[acceptor protein]-L-lysine.. It functions in the pathway protein modification; protein ubiquitination. Functionally, E3 ubiquitin-protein ligase that plays a role in various biological processes such as lung development or innate immunity. Seems to utilize UBE2E1. Promotes innate antiviral response by catalyzing 'Lys-63'-linked ubiquitination of IRF7. Plays an essential role in TLR4-mediated activation of MAPK pathways by promoting 'Lys-48'-linked polyubiquitination of the phosphatase DUSP1/MKP1. The protein is E3 ubiquitin-protein ligase NEURL3 (Neurl3) of Mus musculus (Mouse).